Reading from the N-terminus, the 495-residue chain is Lysine--tRNA ligase (495 aa).

Mg(2+) is bound by residues Glu-406 and Glu-413.

The protein belongs to the class-II aminoacyl-tRNA synthetase family. In terms of assembly, homodimer. It depends on Mg(2+) as a cofactor.

It localises to the cytoplasm. It catalyses the reaction tRNA(Lys) + L-lysine + ATP = L-lysyl-tRNA(Lys) + AMP + diphosphate. This Leuconostoc mesenteroides subsp. mesenteroides (strain ATCC 8293 / DSM 20343 / BCRC 11652 / CCM 1803 / JCM 6124 / NCDO 523 / NBRC 100496 / NCIMB 8023 / NCTC 12954 / NRRL B-1118 / 37Y) protein is Lysine--tRNA ligase.